Here is a 227-residue protein sequence, read N- to C-terminus: Mitochondrial inner membrane protease ATP23 (227 aa).

Residue His-124 coordinates a divalent metal cation. Glu-125 is an active-site residue. An a divalent metal cation-binding site is contributed by His-128.

Belongs to the peptidase M76 family. Interacts with ATP6.

The protein localises to the mitochondrion inner membrane. Its function is as follows. Has a dual role in the assembly of mitochondrial ATPase. Acts as a protease that removes the N-terminal 10 residues of mitochondrial ATPase CF(0) subunit 6 (ATP6) at the intermembrane space side. Also involved in the correct assembly of the membrane-embedded ATPase CF(0) particle, probably mediating association of ATP6 with the subunit 9 ring. This is Mitochondrial inner membrane protease ATP23 (ATP23) from Saccharomyces cerevisiae (strain Lalvin EC1118 / Prise de mousse) (Baker's yeast).